The primary structure comprises 350 residues: MPTSGFVRSTGVFMMAPSAAAKTPITIRLCGPRGFCAGVDRAIQIVVLALKEFGAPVYVRHEIVHNRYVVEGLEAKGAIFVEELDEIPPEHRKQPVVFSAHGVPKSVPADADERNLFYLDATCPLVSKVHKQAMRHHRMGRHVVLIGHAGHPEVIGTMGQLPEGAVSLVETVEDADVYMPPDADNLGFVTQTTLSVDDTAGVIKRLHERFPNLTAPAADSICYATTNRQEAVKQAAPGCDLFLVVGAPNSSNSKRLVEVALRAGAKKAVLVQRASEIDWSTVGDISMVGLSAGASAPEVIVNEIIEAFRDRYDATVELADTVEENEHFLVNRELRHVELTGADMAFVNGE.

C36 serves as a coordination point for [4Fe-4S] cluster. 2 residues coordinate (2E)-4-hydroxy-3-methylbut-2-enyl diphosphate: H65 and H101. Dimethylallyl diphosphate is bound by residues H65 and H101. Residues H65 and H101 each contribute to the isopentenyl diphosphate site. C123 lines the [4Fe-4S] cluster pocket. H151 provides a ligand contact to (2E)-4-hydroxy-3-methylbut-2-enyl diphosphate. H151 is a binding site for dimethylallyl diphosphate. H151 serves as a coordination point for isopentenyl diphosphate. E153 (proton donor) is an active-site residue. T192 contributes to the (2E)-4-hydroxy-3-methylbut-2-enyl diphosphate binding site. Residue C222 coordinates [4Fe-4S] cluster. Residues S250, S251, N252, and S295 each contribute to the (2E)-4-hydroxy-3-methylbut-2-enyl diphosphate site. S250, S251, N252, and S295 together coordinate dimethylallyl diphosphate. The isopentenyl diphosphate site is built by S250, S251, N252, and S295.

Belongs to the IspH family. [4Fe-4S] cluster serves as cofactor.

The enzyme catalyses isopentenyl diphosphate + 2 oxidized [2Fe-2S]-[ferredoxin] + H2O = (2E)-4-hydroxy-3-methylbut-2-enyl diphosphate + 2 reduced [2Fe-2S]-[ferredoxin] + 2 H(+). It carries out the reaction dimethylallyl diphosphate + 2 oxidized [2Fe-2S]-[ferredoxin] + H2O = (2E)-4-hydroxy-3-methylbut-2-enyl diphosphate + 2 reduced [2Fe-2S]-[ferredoxin] + 2 H(+). It functions in the pathway isoprenoid biosynthesis; dimethylallyl diphosphate biosynthesis; dimethylallyl diphosphate from (2E)-4-hydroxy-3-methylbutenyl diphosphate: step 1/1. The protein operates within isoprenoid biosynthesis; isopentenyl diphosphate biosynthesis via DXP pathway; isopentenyl diphosphate from 1-deoxy-D-xylulose 5-phosphate: step 6/6. Catalyzes the conversion of 1-hydroxy-2-methyl-2-(E)-butenyl 4-diphosphate (HMBPP) into a mixture of isopentenyl diphosphate (IPP) and dimethylallyl diphosphate (DMAPP). Acts in the terminal step of the DOXP/MEP pathway for isoprenoid precursor biosynthesis. The sequence is that of 4-hydroxy-3-methylbut-2-enyl diphosphate reductase from Rhizobium meliloti (strain 1021) (Ensifer meliloti).